The sequence spans 386 residues: Formate-dependent phosphoribosylglycinamide formyltransferase (386 aa).

N(1)-(5-phospho-beta-D-ribosyl)glycinamide is bound by residues 10 to 11 (EL) and E70. Residues R102, K143, 148 to 153 (SSGKGQ), 183 to 186 (EAFV), and E191 contribute to the ATP site. One can recognise an ATP-grasp domain in the interval 107–298 (DLAAKELGLK…EFELHLRAIL (192 aa)). Mg(2+) contacts are provided by E256 and E268. Residues D275, K346, and 353-354 (RR) each bind N(1)-(5-phospho-beta-D-ribosyl)glycinamide.

This sequence belongs to the PurK/PurT family. In terms of assembly, homodimer.

It catalyses the reaction N(1)-(5-phospho-beta-D-ribosyl)glycinamide + formate + ATP = N(2)-formyl-N(1)-(5-phospho-beta-D-ribosyl)glycinamide + ADP + phosphate + H(+). The protein operates within purine metabolism; IMP biosynthesis via de novo pathway; N(2)-formyl-N(1)-(5-phospho-D-ribosyl)glycinamide from N(1)-(5-phospho-D-ribosyl)glycinamide (formate route): step 1/1. Involved in the de novo purine biosynthesis. Catalyzes the transfer of formate to 5-phospho-ribosyl-glycinamide (GAR), producing 5-phospho-ribosyl-N-formylglycinamide (FGAR). Formate is provided by PurU via hydrolysis of 10-formyl-tetrahydrofolate. This chain is Formate-dependent phosphoribosylglycinamide formyltransferase, found in Flavobacterium psychrophilum (strain ATCC 49511 / DSM 21280 / CIP 103535 / JIP02/86).